A 464-amino-acid chain; its full sequence is Gamma-aminobutyric acid receptor subunit rho-3 (464 aa).

An N-terminal signal peptide occupies residues 1 to 15; sequence MVLAFWLAFFTYTWI. Residues 16–263 are Extracellular-facing; the sequence is TLMLDASAVK…LFINFVLRRH (248 aa). Arg108 lines the 4-aminobutanoate pocket. N-linked (GlcNAc...) asparagine glycosylation occurs at Asn123. 4-aminobutanoate is bound at residue Ser172. A disulfide bridge links Cys181 with Cys195. A glycan (N-linked (GlcNAc...) asparagine) is linked at Asn194. Glu200 contributes to the 4-aminobutanoate binding site. Residues 264–284 form a helical membrane-spanning segment; that stretch reads IFFFVLQTYFPAMLMVMLSWV. Residues 285 to 296 are Cytoplasmic-facing; that stretch reads SFWIDRRAVPAR. A helical membrane pass occupies residues 297 to 317; sequence VSLGITTVLTMSTIVTGVSAS. Residues 318–328 lie on the Extracellular side of the membrane; it reads MPQVSYVKAVD. The chain crosses the membrane as a helical span at residues 329–349; that stretch reads VYMWVSSLFVFLSVIEYAAVN. An interaction with SQSTM1 region spans residues 344–445; that stretch reads EYAAVNYLTT…NNHVIDTYSR (102 aa). The Cytoplasmic portion of the chain corresponds to 350 to 443; the sequence is YLTTVEEWKQ…LENNHVIDTY (94 aa). Residues 444-464 traverse the membrane as a helical segment; that stretch reads SRIVFPVVYIIFNLFYWGIYV.

This sequence belongs to the ligand-gated ion channel (TC 1.A.9) family. Gamma-aminobutyric acid receptor (TC 1.A.9.5) subfamily. GABRR3 sub-subfamily. As to quaternary structure, three rho subunits (rho-1/GBRR1, rho-2/GBRR2 and rho-3/GBRR3) coassemble either to form functional homopentamers or heteropentamers. Forms a ternary complex with SQSTM1 and PRKCZ. In terms of tissue distribution, expressed in retina.

Its subcellular location is the postsynaptic cell membrane. The protein resides in the cell membrane. The catalysed reaction is chloride(in) = chloride(out). Its activity is regulated as follows. Activated by agonists in the following the potency order: muscimol &gt; TACP &gt; TACA &gt; thiomuscimol &gt; CAMP &gt; CACA, when forming a homopentamer. Inhibited by TPMPA, a rho-specific antagonist, when forming a homopentamer. Inhibited antagonists in the following the potency order: TAMP = TPMPA &gt; P4MPA = THIP &gt; 14AA &gt; 3-APA, when forming a homopentamer. Functionally, rho subunit of the pentameric ligand-gated chloride channels responsible for mediating the effects of gamma-aminobutyric acid (GABA), the major inhibitory neurotransmitter in the brain. Rho-containing GABA-gated chloride channels are a subclass of GABA(A) receptors (GABAARs) entirely composed of rho subunits, where GABA molecules bind at the rho intersubunit interfaces. When activated by GABA, rho-GABAARs selectively allow the flow of chloride anions across the cell membrane down their electrochemical gradient. The chain is Gamma-aminobutyric acid receptor subunit rho-3 from Rattus norvegicus (Rat).